The following is a 137-amino-acid chain: Small ribosomal subunit protein uS9 (137 aa).

Residues 105–117 (LKVEGYLTRDPRA) are compositionally biased toward basic and acidic residues. The tract at residues 105–137 (LKVEGYLTRDPRAKERKKYGLRKARKAPQYSKR) is disordered. Over residues 118 to 137 (KERKKYGLRKARKAPQYSKR) the composition is skewed to basic residues.

It belongs to the universal ribosomal protein uS9 family.

This is Small ribosomal subunit protein uS9 from Cyanothece sp. (strain PCC 7425 / ATCC 29141).